The following is a 327-amino-acid chain: MSFLGGLFGPVCEIDVILNDAESRKTAELKTEEGKLEKHYLFYDGESVSGKVNINVKQTSKRLEHQGIRIEFVGQIELFSDKSNTHEFVNLVKELALPGELTQNRSYDFEFMQVEKPYESYVGANVRLRYFLKVTIVRRLSDLVKEYDLIVHQLATYPDVNNSIKMEVGIEDCLHIEFEYNKSKYHLKDVIVGKIYFLLVRIKIQHMELQLIKKEMTGIGPSTTTETETVAKYEIMDGAPVKGESIPIRLFLAGYDLTPTMRDVNKKFSVRYFLNLVLVDEEDRRYFKQQEIVLWRKAPEKMRKRNFHQRYESPEPRPSLSAEQPEM.

Residues 305-327 (RNFHQRYESPEPRPSLSAEQPEM) are disordered.

It belongs to the VPS26 family. As to quaternary structure, component of the heterotrimeric retromer cargo-selective complex (CSC) which is believed to associate with variable sorting nexins to form functionally distinct retromer complex variants.

It is found in the cytoplasm. It localises to the endosome membrane. Its subcellular location is the early endosome. Functionally, acts as a component of the retromer cargo-selective complex (CSC). The CSC is believed to be the core functional component of retromer or respective retromer complex variants acting to prevent missorting of selected transmembrane cargo proteins into the lysosomal degradation pathway. Retromer mediates retrograde transport of cargo proteins from endosomes to the trans-Golgi network (TGN). In Danio rerio (Zebrafish), this protein is Vacuolar protein sorting-associated protein 26A (vps26a).